Reading from the N-terminus, the 840-residue chain is Heat shock 70 kDa protein 4 (840 aa).

Lysine 53 carries the post-translational modification N6-acetyllysine. Serine 76 is subject to Phosphoserine. Tyrosine 89 and tyrosine 336 each carry phosphotyrosine. Residues serine 393 and serine 415 each carry the phosphoserine modification. Lysine 430 is modified (N6-acetyllysine). Positions 500–575 (VHKSEESEEP…QAKKAKVKTS (76 aa)) are disordered. Positions 514-533 (QNAKEEEKMQVDQEEPHTEE) are enriched in basic and acidic residues. A Phosphothreonine modification is found at threonine 538. Serine 546 is modified (phosphoserine). Tyrosine 660 is modified (phosphotyrosine). At serine 756 the chain carries Phosphoserine. Residue lysine 773 is modified to N6-methyllysine. Residues 781 to 840 (PIISKPKPKVEPPKEEPKHAEQNGPVDGQGDNPGTQAAEHGADTAVPSDGDKKLPEMDID) are disordered. Basic and acidic residues-rich tracts occupy residues 788–801 (PKVEPPKEEPKHAE) and 829–840 (DGDKKLPEMDID).

This sequence belongs to the heat shock protein 70 family. In terms of assembly, interacts with TJP1/ZO-1. Ubiquitous. Highly expressed in testis.

The protein localises to the cytoplasm. The protein is Heat shock 70 kDa protein 4 (Hspa4) of Rattus norvegicus (Rat).